The chain runs to 97 residues: DNA/RNA-binding protein Alba 1 (97 aa).

Ser-2 carries the N-acetylserine; by ard1 acetylase modification. RNA is bound by residues Lys-16, Lys-17, and Tyr-22. Position 16 is an N6,N6,N6-trimethyllysine; alternate (Lys-16). At Lys-16 the chain carries N6,N6-dimethyllysine; alternate. An N6-acetyllysine; alternate modification is found at Lys-16. Lys-16 is modified (N6-methyllysine; alternate). Asn-31 bears the Deamidated asparagine; partial mark. At Gln-32 the chain carries Deamidated glutamine; partial. Lys-40 carries the post-translational modification N6-methyllysine; partial. The RNA site is built by Arg-42 and Arg-44. Position 48 is an N6-acetyllysine; partial (Lys-48). Residue Asp-51 is modified to Aspartate methyl ester; partial. Asn-58 bears the Deamidated asparagine; partial mark. Position 64 is an N6-acetyllysine; alternate; partial (Lys-64). An N6-methyllysine; alternate; partial modification is found at Lys-64. An N6-acetyllysine; partial modification is found at Lys-68. Gln-75 is subject to N5-methylglutamine; partial. Asp-81 is modified (aspartate methyl ester; partial). Lys-97 is subject to N6-methyllysine; partial.

The protein belongs to the histone-like Alba family. In terms of assembly, forms homodimers and higher order oligomers, e.g. homotetramers. Acetylated. Acetylation at Lys-16 by the Pat acetylase decreases DNA-binding affinity. Deacetylation at Lys-16 by the CobB deacetylase increases DNA-binding affinity. Acetylation at Ser-2 is involved in the regulation of the turnover of the protein.

Its subcellular location is the cytoplasm. The protein localises to the chromosome. Functionally, binds double-stranded DNA tightly but without sequence specificity. Involved in DNA compaction. Possesses DNA endonuclease activity. Prevents transcription after DNA binding. Binds single-stranded DNA and RNA in vitro. Binds rRNA and mRNA in vivo. May play a role in maintaining the structural and functional stability of RNA, and, perhaps, ribosomes. Binds double-stranded RNA (dsRNA) and exhibits RNA chaperone activity. Required for normal growth. The chain is DNA/RNA-binding protein Alba 1 from Saccharolobus islandicus (strain REY15A) (Sulfolobus islandicus).